Reading from the N-terminus, the 139-residue chain is Large-conductance mechanosensitive channel (139 aa).

2 helical membrane passes run 19–39 (VAVI…ADVI) and 81–101 (GNFL…FMVV).

Belongs to the MscL family. As to quaternary structure, homopentamer.

It is found in the cell inner membrane. In terms of biological role, channel that opens in response to stretch forces in the membrane lipid bilayer. May participate in the regulation of osmotic pressure changes within the cell. In Nitrobacter hamburgensis (strain DSM 10229 / NCIMB 13809 / X14), this protein is Large-conductance mechanosensitive channel.